The following is a 336-amino-acid chain: Protein-glutamate methylesterase/protein-glutamine glutaminase 3 (336 aa).

The Response regulatory domain occupies 2–119 (KIAIVNDMPM…PNPREAAAPL (118 aa)). At D53 the chain carries 4-aspartylphosphate. A CheB-type methylesterase domain is found at 147 to 336 (VSRRDRLVAI…APRLMEVFTQ (190 aa)). Catalysis depends on residues S159, H186, and D279.

It belongs to the CheB family. Post-translationally, phosphorylated by CheA. Phosphorylation of the N-terminal regulatory domain activates the methylesterase activity.

It localises to the cytoplasm. It carries out the reaction [protein]-L-glutamate 5-O-methyl ester + H2O = L-glutamyl-[protein] + methanol + H(+). It catalyses the reaction L-glutaminyl-[protein] + H2O = L-glutamyl-[protein] + NH4(+). Its function is as follows. Involved in chemotaxis. Part of a chemotaxis signal transduction system that modulates chemotaxis in response to various stimuli. Catalyzes the demethylation of specific methylglutamate residues introduced into the chemoreceptors (methyl-accepting chemotaxis proteins or MCP) by CheR. Also mediates the irreversible deamidation of specific glutamine residues to glutamic acid. The chain is Protein-glutamate methylesterase/protein-glutamine glutaminase 3 from Pseudomonas syringae pv. tomato (strain ATCC BAA-871 / DC3000).